The sequence spans 241 residues: Pyridoxine 5'-phosphate synthase (241 aa).

Residue Asn-7 participates in 3-amino-2-oxopropyl phosphate binding. Position 9–10 (9–10 (DH)) interacts with 1-deoxy-D-xylulose 5-phosphate. Position 18 (Arg-18) interacts with 3-amino-2-oxopropyl phosphate. Residue His-43 is the Proton acceptor of the active site. Residues Arg-45 and His-50 each coordinate 1-deoxy-D-xylulose 5-phosphate. Catalysis depends on Glu-70, which acts as the Proton acceptor. A 1-deoxy-D-xylulose 5-phosphate-binding site is contributed by Thr-100. His-191 functions as the Proton donor in the catalytic mechanism. Residues Ser-192 and 213–214 (GH) contribute to the 3-amino-2-oxopropyl phosphate site.

Belongs to the PNP synthase family. In terms of assembly, homooctamer; tetramer of dimers.

It localises to the cytoplasm. The catalysed reaction is 3-amino-2-oxopropyl phosphate + 1-deoxy-D-xylulose 5-phosphate = pyridoxine 5'-phosphate + phosphate + 2 H2O + H(+). Its pathway is cofactor biosynthesis; pyridoxine 5'-phosphate biosynthesis; pyridoxine 5'-phosphate from D-erythrose 4-phosphate: step 5/5. Catalyzes the complicated ring closure reaction between the two acyclic compounds 1-deoxy-D-xylulose-5-phosphate (DXP) and 3-amino-2-oxopropyl phosphate (1-amino-acetone-3-phosphate or AAP) to form pyridoxine 5'-phosphate (PNP) and inorganic phosphate. The protein is Pyridoxine 5'-phosphate synthase of Nitrosomonas eutropha (strain DSM 101675 / C91 / Nm57).